The primary structure comprises 8903 residues: Nonribosomal peptide synthetase vlms (8903 aa).

Positions 11-84 (GSCRTTLGKV…ELADSIDEQN (74 aa)) constitute a Carrier 1 domain. The interval 13-81 (CRTTLGKVAA…TLAELADSID (69 aa)) is thiolation (T) domain 1. An O-(pantetheine 4'-phosphoryl)serine modification is found at Ser-45. 2 adenylation (A) domain regions span residues 59 to 736 (GIWV…SHLP) and 989 to 1386 (MAAQ…IKIR). Residues 572-953 (VPHQLDTEKL…FLLDGVNMSI (382 aa)) are condensation (C) domain 1. The Carrier 2 domain maps to 1524-1600 (SSMSTVEQEL…QLALAAESQA (77 aa)). A thiolation (T) domain 2 region spans residues 1529 to 1597 (VEQELRQIWS…TIPQLALAAE (69 aa)). An O-(pantetheine 4'-phosphoryl)serine modification is found at Ser-1561. The segment at 1613 to 2050 (FPLSPIQKMY…TVKELAAVSA (438 aa)) is epimerase (E) domain 1. Residues 2091-2523 (DILPCSPIQQ…LLSVSEENKL (433 aa)) form a condensation (C) domain 2 region. Positions 2546–2943 (MSSHADATAI…GRQDSQVKIR (398 aa)) are adenylation (A) domain 2. Residues 3084-3160 (LFTTAIERQL…ELALQAKMVD (77 aa)) enclose the Carrier 3 domain. Residues 3089-3157 (IERQLRQVWS…TIPELALQAK (69 aa)) are thiolation (T) domain 3. O-(pantetheine 4'-phosphoryl)serine is present on Ser-3121. The epimerase (E) domain 2 stretch occupies residues 3174 to 3614 (FALSPIQQMY…AIKSLVEELM (441 aa)). The interval 3655-4093 (EDILPCSPMQ…LMSTKDIQQL (439 aa)) is condensation (C) domain 3. Residues 4114–4512 (ERLNTQPESM…GRIDTQIKIR (399 aa)) are adenylation (A) domain 3. One can recognise a Carrier 4 domain in the interval 4649-4725 (APRTTMEKKL…DLAEATELKC (77 aa)). The segment at 4654-4722 (MEKKLRDLFA…ILADLAEATE (69 aa)) is thiolation (T) domain 4. Ser-4686 bears the O-(pantetheine 4'-phosphoryl)serine mark. Positions 4775–5191 (EDVYPCSPLQ…AQLQMLSEED (417 aa)) are condensation (C) domain 4. The tract at residues 5216–5614 (ETMTSQPDAP…GRRDTQVKIR (399 aa)) is adenylation (A) domain 4. The 77-residue stretch at 5753–5829 (APTTAMEKRL…DLAQELEQRH (77 aa)) folds into the Carrier 5 domain. A thiolation (T) domain 5 region spans residues 5758–5826 (MEKRLQNLFC…RLGDLAQELE (69 aa)). Ser-5790 bears the O-(pantetheine 4'-phosphoryl)serine mark. Residue Glu-5875 is a region of interest, condensation (C) domain 5. The segment at 6311-6702 (EEQMSLRPSE…GRMDGQIKIR (392 aa)) is adenylation (A) domain 5. A Carrier 6 domain is found at 6836–6912 (SSATNTERQL…ELAATLEVMD (77 aa)). Residues 6841–6909 (TERQLRQIWS…TIPELAATLE (69 aa)) form a thiolation (T) domain 6 region. Position 6873 is an O-(pantetheine 4'-phosphoryl)serine (Ser-6873). The interval 6923–7349 (GFFELSPIQR…YGRTIKTLVE (427 aa)) is epimerase (E) domain 3. The condensation (C) domain 6 stretch occupies residues 7391–7823 (EDILPCSPIQ…LVLTNDEAQI (433 aa)). Positions 7844 to 8240 (EQMARKPEAQ…LDRIGTQVKI (397 aa)) are adenylation (A) domain 6. One can recognise a Carrier 7 domain in the interval 8368–8444 (APISATEAVF…AMAACVSDVS (77 aa)). The tract at residues 8369–8441 (PISATEAVFC…VLHAMAACVS (73 aa)) is thiolation (T) domain 7. Ser-8405 carries the post-translational modification O-(pantetheine 4'-phosphoryl)serine. The interval 8482 to 8897 (DVLPTTEFQT…MENPRSTVGH (416 aa)) is condensation (C) domain 7.

It belongs to the NRP synthetase family.

It participates in secondary metabolite biosynthesis. Nonribosomal peptide synthetase; part of the gene cluster that mediates the biosynthesis of verlamelin, a lipopeptide that exhibits antifungal activity against plant pathogenic fungi. Verlamelin is a cyclic hexadepsipeptide and is bridged by ester bonding between a 5-hydroxytetradecanoic acid moiety and a carboxyl group on the terminal Val of amide-bonded tetradecanoyl-hexapeptide D-allo-Thr-D-Ala-L-Pro-L-Gln-D-Tyr-L-Val. VlmA and vlmB are altogether regarded as essential components in the biosynthesis of 5-hydroxytetradecanoic acid. VlmA catalyzes the hydroxylation at position C5 of tetradecanoic acid produced in primary metabolism, while the precise function of vlmB still remains to be solved. To be loaded onto the waiting NRPS, 5-hydroxytetradecanoic acid is activated in the form of acyladenylate by the AMP-dependent ligase vlmC. VlmS seems to accept the fatty-acyl intermediate onto the initial module to further elongate amino acid residues by the downstream modules. In addition, in the last module at its C-terminus, vlmS contains a surplus condensation (C) domain that may be involved in cyclization, the last step to form verlamelin. The chain is Nonribosomal peptide synthetase vlms from Lecanicillium sp.